A 200-amino-acid polypeptide reads, in one-letter code: UPF0316 protein SACOL1973 (200 aa).

3 helical membrane-spanning segments follow: residues 8–28 (PWLM…FLTM), 40–60 (IAAS…GLVM), and 66–86 (IQNI…GMKI).

This sequence belongs to the UPF0316 family.

It localises to the cell membrane. This is UPF0316 protein SACOL1973 from Staphylococcus aureus (strain COL).